The chain runs to 126 residues: Holo-[acyl-carrier-protein] synthase (126 aa).

Residues Asp-9 and Glu-58 each coordinate Mg(2+).

The protein belongs to the P-Pant transferase superfamily. AcpS family. It depends on Mg(2+) as a cofactor.

The protein resides in the cytoplasm. It catalyses the reaction apo-[ACP] + CoA = holo-[ACP] + adenosine 3',5'-bisphosphate + H(+). Functionally, transfers the 4'-phosphopantetheine moiety from coenzyme A to a Ser of acyl-carrier-protein. The sequence is that of Holo-[acyl-carrier-protein] synthase from Vibrio parahaemolyticus serotype O3:K6 (strain RIMD 2210633).